The following is a 117-amino-acid chain: NADH-ubiquinone oxidoreductase chain 3 (117 aa).

Helical transmembrane passes span 1–21 (MLML…VMML), 58–78 (FLIA…LPMI), and 86–106 (LMNW…GLYH).

The protein belongs to the complex I subunit 3 family.

It is found in the mitochondrion membrane. It carries out the reaction a ubiquinone + NADH + 5 H(+)(in) = a ubiquinol + NAD(+) + 4 H(+)(out). Core subunit of the mitochondrial membrane respiratory chain NADH dehydrogenase (Complex I) that is believed to belong to the minimal assembly required for catalysis. Complex I functions in the transfer of electrons from NADH to the respiratory chain. The immediate electron acceptor for the enzyme is believed to be ubiquinone. This Anopheles gambiae (African malaria mosquito) protein is NADH-ubiquinone oxidoreductase chain 3 (mt:ND3).